The primary structure comprises 712 residues: Polyribonucleotide nucleotidyltransferase (712 aa).

Mg(2+)-binding residues include aspartate 487 and aspartate 493. The region spanning 554–613 (PKIITMTINPDKIRDVIGPSGKQINKIIEETGVKIDIEQDGTVFISSINQEMNDKAKKII) is the KH domain. The region spanning 623 to 691 (GEIYEGKVKR…KQGRVNLSRK (69 aa)) is the S1 motif domain.

The protein belongs to the polyribonucleotide nucleotidyltransferase family. The cofactor is Mg(2+).

The protein resides in the cytoplasm. It carries out the reaction RNA(n+1) + phosphate = RNA(n) + a ribonucleoside 5'-diphosphate. Involved in mRNA degradation. Catalyzes the phosphorolysis of single-stranded polyribonucleotides processively in the 3'- to 5'-direction. The polypeptide is Polyribonucleotide nucleotidyltransferase (Bacillus anthracis).